Reading from the N-terminus, the 180-residue chain is MKMLLLLCLGLTLVCVHAEEASSTGRNFNVEKINGEWHTIILASDKREKIEDNGNFRLFLEQIHVLEKSLVLKFHTVRDEECSELSMVADKTEKAGEYSVTYDGFNTFTIPKTDYDNFLMAHLINEKDGETFQLMGLYGREPDLSSDIKERFAKLCEEHGILRENIIDLSNANRCLQARE.

The signal sequence occupies residues 1 to 18; that stretch reads MKMLLLLCLGLTLVCVHA. A disulfide bridge connects residues Cys-82 and Cys-175.

This sequence belongs to the calycin superfamily. Lipocalin family. Abundant in the urine of adult male mice but absent from that of females.

Its subcellular location is the secreted. Binds pheromones that are released from drying urine of males. These pheromones affect the sexual behavior of females. The chain is Major urinary protein 2 (Mup2) from Mus musculus (Mouse).